The sequence spans 289 residues: Homoserine kinase (289 aa).

79–89 (PLARGLGSSSS) lines the ATP pocket.

This sequence belongs to the GHMP kinase family. Homoserine kinase subfamily.

The protein localises to the cytoplasm. The enzyme catalyses L-homoserine + ATP = O-phospho-L-homoserine + ADP + H(+). Its pathway is amino-acid biosynthesis; L-threonine biosynthesis; L-threonine from L-aspartate: step 4/5. In terms of biological role, catalyzes the ATP-dependent phosphorylation of L-homoserine to L-homoserine phosphate. The protein is Homoserine kinase of Streptococcus pneumoniae (strain Taiwan19F-14).